A 430-amino-acid chain; its full sequence is Adenylosuccinate synthetase (430 aa).

GTP contacts are provided by residues 12–18 (GDEGKGK) and 40–42 (GHT). Residue Asp-13 is the Proton acceptor of the active site. Asp-13 and Gly-40 together coordinate Mg(2+). IMP contacts are provided by residues 13–16 (DEGK), 38–41 (NAGH), Thr-128, Arg-142, Gln-223, Thr-238, and Arg-302. Residue His-41 is the Proton donor of the active site. Substrate is bound at residue 298 to 304 (TTTGRPR). GTP is bound by residues Arg-304, 330 to 332 (SID), and 412 to 414 (SVG).

Belongs to the adenylosuccinate synthetase family. In terms of assembly, homodimer. Requires Mg(2+) as cofactor.

It is found in the cytoplasm. It carries out the reaction IMP + L-aspartate + GTP = N(6)-(1,2-dicarboxyethyl)-AMP + GDP + phosphate + 2 H(+). It participates in purine metabolism; AMP biosynthesis via de novo pathway; AMP from IMP: step 1/2. In terms of biological role, plays an important role in the de novo pathway of purine nucleotide biosynthesis. Catalyzes the first committed step in the biosynthesis of AMP from IMP. This is Adenylosuccinate synthetase from Streptococcus pyogenes serotype M3 (strain ATCC BAA-595 / MGAS315).